Consider the following 656-residue polypeptide: Membrane-associated tyrosine- and threonine-specific cdc2-inhibitory kinase wee-1.3 (656 aa).

The span at 1 to 11 (MDETENNTSID) shows a compositional bias: polar residues. Residues 1 to 24 (MDETENNTSIDSVEVGPSSPRVVA) form a disordered region. Residues 107-354 (FQIDEIIGRG…SDALRKHLSI (248 aa)) enclose the Protein kinase domain. Residues 113 to 121 (IGRGSFGEV) and lysine 136 each bind ATP. The active-site Proton acceptor is aspartate 227. The Mg(2+) site is built by asparagine 232 and aspartate 245. Disordered regions lie at residues 449–552 (PFDF…NSSI) and 617–656 (KGKE…GDEN). Residues 486–505 (ATCSSSNSSAIETAEDSLSS) show a composition bias toward polar residues. Residues 617–631 (KGKEKPVVEPAELRQ) are compositionally biased toward basic and acidic residues. Over residues 646-656 (ASFQGSSGDEN) the composition is skewed to polar residues.

The protein belongs to the protein kinase superfamily. Ser/Thr protein kinase family. WEE1 subfamily.

The protein resides in the golgi apparatus membrane. It is found in the cytoplasm. It carries out the reaction L-seryl-[protein] + ATP = O-phospho-L-seryl-[protein] + ADP + H(+). The enzyme catalyses L-threonyl-[protein] + ATP = O-phospho-L-threonyl-[protein] + ADP + H(+). Functionally, acts as a negative regulator of entry into mitosis (G2 to M transition) by phosphorylation of the CDK1 kinase during oocyte maturation. Required for embryonic development, germline proliferation and initiation of meiosis during spermatogenesis. Required for chromosome structure during mitosis and negative regulation of nuclear envelope breakdown. This is Membrane-associated tyrosine- and threonine-specific cdc2-inhibitory kinase wee-1.3 from Caenorhabditis briggsae.